The following is a 663-amino-acid chain: COBRA-like protein 9 (663 aa).

The N-terminal stretch at 1 to 23 is a signal peptide; sequence MGVLLPIFFGVLLLFTVTPPSMS. N-linked (GlcNAc...) asparagine glycosylation is found at Asn-63, Asn-111, Asn-121, Asn-169, Asn-203, Asn-326, Asn-355, Asn-397, Asn-409, Asn-429, Asn-470, Asn-550, and Asn-561. Ser-638 carries GPI-anchor amidated serine lipidation. Positions 639-663 are cleaved as a propeptide — removed in mature form; it reads GGRRNGAITVLSFITFYVAAFMVLL.

It belongs to the COBRA family. As to expression, expressed only in flowers.

It is found in the cell membrane. The polypeptide is COBRA-like protein 9 (COBL9) (Arabidopsis thaliana (Mouse-ear cress)).